A 181-amino-acid chain; its full sequence is Large ribosomal subunit protein uL6 (181 aa).

This sequence belongs to the universal ribosomal protein uL6 family. In terms of assembly, part of the 50S ribosomal subunit.

Its function is as follows. This protein binds to the 23S rRNA, and is important in its secondary structure. It is located near the subunit interface in the base of the L7/L12 stalk, and near the tRNA binding site of the peptidyltransferase center. The protein is Large ribosomal subunit protein uL6 of Desulforudis audaxviator (strain MP104C).